Consider the following 285-residue polypeptide: 4-diphosphocytidyl-2-C-methyl-D-erythritol kinase (285 aa).

Lys11 is an active-site residue. Position 95 to 105 (95 to 105) interacts with ATP; that stretch reads PVAAGIGGGSA. Asp137 is a catalytic residue.

Belongs to the GHMP kinase family. IspE subfamily.

It carries out the reaction 4-CDP-2-C-methyl-D-erythritol + ATP = 4-CDP-2-C-methyl-D-erythritol 2-phosphate + ADP + H(+). The protein operates within isoprenoid biosynthesis; isopentenyl diphosphate biosynthesis via DXP pathway; isopentenyl diphosphate from 1-deoxy-D-xylulose 5-phosphate: step 3/6. In terms of biological role, catalyzes the phosphorylation of the position 2 hydroxy group of 4-diphosphocytidyl-2C-methyl-D-erythritol. This Paramagnetospirillum magneticum (strain ATCC 700264 / AMB-1) (Magnetospirillum magneticum) protein is 4-diphosphocytidyl-2-C-methyl-D-erythritol kinase.